The chain runs to 72 residues: Translation initiation factor IF-1 (72 aa).

One can recognise an S1-like domain in the interval M1–K72.

The protein belongs to the IF-1 family. Component of the 30S ribosomal translation pre-initiation complex which assembles on the 30S ribosome in the order IF-2 and IF-3, IF-1 and N-formylmethionyl-tRNA(fMet); mRNA recruitment can occur at any time during PIC assembly.

Its subcellular location is the cytoplasm. In terms of biological role, one of the essential components for the initiation of protein synthesis. Stabilizes the binding of IF-2 and IF-3 on the 30S subunit to which N-formylmethionyl-tRNA(fMet) subsequently binds. Helps modulate mRNA selection, yielding the 30S pre-initiation complex (PIC). Upon addition of the 50S ribosomal subunit IF-1, IF-2 and IF-3 are released leaving the mature 70S translation initiation complex. This Campylobacter hominis (strain ATCC BAA-381 / DSM 21671 / CCUG 45161 / LMG 19568 / NCTC 13146 / CH001A) protein is Translation initiation factor IF-1.